We begin with the raw amino-acid sequence, 378 residues long: Putative F-box protein At3g24580 (378 aa).

Residues 1–47 (MTKMSNLPNDLAEEVLSRVSLTSLRNVRLTCKDWNTLSKGESFAKNH) form the F-box domain.

The chain is Putative F-box protein At3g24580 from Arabidopsis thaliana (Mouse-ear cress).